A 362-amino-acid chain; its full sequence is Forkhead box protein F (362 aa).

Residues 19 to 70 (LDSTAPNNSHRTIKAENYFNEDEEDYNENSHEDSEDSKEDSDGQGCRSRKRK) are disordered. The segment covering 37–57 (FNEDEEDYNENSHEDSEDSKE) has biased composition (acidic residues). Positions 72 to 169 (KPPFSYIALI…EENGFRRRPR (98 aa)) form a DNA-binding region, fork-head.

The protein localises to the nucleus. Transcription factor that is required for cell fate of coelomocytes which are non-muscle mesodermal cells. Acts in concert with, and by activating expression of, the homeodomain gene ceh-34. Binds to the sequence motif 5'-ATAAA[T/C]A-3'. The chain is Forkhead box protein F from Caenorhabditis elegans.